We begin with the raw amino-acid sequence, 38 residues long: Photosystem II reaction center protein X (38 aa).

Residues 8–28 (FLWSLVAGAVVLGALFGAIIF) traverse the membrane as a helical segment.

The protein belongs to the PsbX family. Type 1 subfamily. As to quaternary structure, PSII is composed of 1 copy each of membrane proteins PsbA, PsbB, PsbC, PsbD, PsbE, PsbF, PsbH, PsbI, PsbJ, PsbK, PsbL, PsbM, PsbT, PsbX, PsbY, PsbZ, Psb30/Ycf12, peripheral proteins PsbO, CyanoQ (PsbQ), PsbU, PsbV and a large number of cofactors. It forms dimeric complexes.

It localises to the cellular thylakoid membrane. In terms of biological role, involved in the binding and/or turnover of quinones at the Q(B) site of photosystem II (PSII). PSII is a light-driven water plastoquinone oxidoreductase, using light energy to abstract electrons from H(2)O, generating a proton gradient subsequently used for ATP formation. The polypeptide is Photosystem II reaction center protein X (Synechococcus sp. (strain JA-2-3B'a(2-13)) (Cyanobacteria bacterium Yellowstone B-Prime)).